The sequence spans 689 residues: Glycine--tRNA ligase beta subunit (689 aa).

The protein belongs to the class-II aminoacyl-tRNA synthetase family. As to quaternary structure, tetramer of two alpha and two beta subunits.

Its subcellular location is the cytoplasm. It catalyses the reaction tRNA(Gly) + glycine + ATP = glycyl-tRNA(Gly) + AMP + diphosphate. The protein is Glycine--tRNA ligase beta subunit of Salmonella paratyphi C (strain RKS4594).